Consider the following 370-residue polypeptide: Lipoyl synthase, mitochondrial (370 aa).

[4Fe-4S] cluster contacts are provided by cysteine 100, cysteine 105, cysteine 111, cysteine 131, cysteine 135, cysteine 138, and serine 346. The region spanning 116–335 (DKSRATATIM…KEVAEKLGFL (220 aa)) is the Radical SAM core domain.

This sequence belongs to the radical SAM superfamily. Lipoyl synthase family. The cofactor is [4Fe-4S] cluster.

Its subcellular location is the mitochondrion. It catalyses the reaction [[Fe-S] cluster scaffold protein carrying a second [4Fe-4S](2+) cluster] + N(6)-octanoyl-L-lysyl-[protein] + 2 oxidized [2Fe-2S]-[ferredoxin] + 2 S-adenosyl-L-methionine + 4 H(+) = [[Fe-S] cluster scaffold protein] + N(6)-[(R)-dihydrolipoyl]-L-lysyl-[protein] + 4 Fe(3+) + 2 hydrogen sulfide + 2 5'-deoxyadenosine + 2 L-methionine + 2 reduced [2Fe-2S]-[ferredoxin]. It functions in the pathway protein modification; protein lipoylation via endogenous pathway; protein N(6)-(lipoyl)lysine from octanoyl-[acyl-carrier-protein]: step 2/2. Catalyzes the radical-mediated insertion of two sulfur atoms into the C-6 and C-8 positions of the octanoyl moiety bound to the lipoyl domains of lipoate-dependent enzymes, thereby converting the octanoylated domains into lipoylated derivatives. The polypeptide is Lipoyl synthase, mitochondrial (lip5) (Schizosaccharomyces pombe (strain 972 / ATCC 24843) (Fission yeast)).